We begin with the raw amino-acid sequence, 2122 residues long: Unique GC organizer UGO (2122 aa).

Helical transmembrane passes span 19 to 39, 50 to 70, 82 to 102, 115 to 135, and 145 to 165; these read FAVA…TNSL, LFGM…FVIV, TYIM…MQLI, VLTF…VLIG, and VVCS…DVGL. Disordered regions lie at residues 337-403, 422-532, 565-591, 627-762, 785-815, 848-870, 903-949, 999-1046, 1068-1308, 1328-1368, 1515-1540, 1560-1608, and 1639-1727; these read AALH…HRSA, FRGL…GPFV, DLRE…SGLQ, HRRG…GRAN, HAAS…CSAS, MSRR…RAER, SKEG…ASAN, RNET…LHSR, PSDL…HEAV, AGLS…SEEE, ANSS…AASA, AAEH…TPHT, and QGLG…TFFG. Over residues 363 to 374 the composition is skewed to polar residues; the sequence is RSNTLRGCSGQV. Basic and acidic residues-rich tracts occupy residues 503 to 525, 565 to 585, and 632 to 645; these read LRMD…DPAK, DLRE…HAAA, and GARD…RGEP. A compositionally biased stretch (basic residues) spans 672-687; sequence RLSRSRRHKTRTYRRG. Low complexity predominate over residues 690–699; the sequence is SDGTTAGTSD. Residues 707 to 720 show a composition bias toward acidic residues; that stretch reads LEDEGSDSGQESES. Over residues 725-735 the composition is skewed to basic residues; that stretch reads RRRMRSSRNRR. Low complexity predominate over residues 741–750; that stretch reads EDSSSGTSVR. Residues 751-760 are compositionally biased toward basic and acidic residues; it reads SEGRHCREGR. N762 carries an N-linked (GlcNAc...) asparagine glycan. A compositionally biased stretch (basic residues) spans 848 to 860; that stretch reads MSRRRRREGKSRP. Polar residues-rich tracts occupy residues 999-1011 and 1072-1097; these read RNET…SPAT and SLFT…SARI. The N-linked (GlcNAc...) asparagine glycan is linked to N1000. An N-linked (GlcNAc...) asparagine glycan is attached at N1165. Basic and acidic residues predominate over residues 1220–1261; it reads SREDLVGEADSHVSPEKEVFVSSRREKREEQVPRSRREERRD. Residues 1262–1276 are compositionally biased toward basic residues; that stretch reads RRGRRWRRGRRRRKA. Basic and acidic residues-rich tracts occupy residues 1277–1289 and 1345–1359; these read RECS…RDSS and GDMR…HSDG. Residues 1515 to 1527 are compositionally biased toward polar residues; it reads ANSSTAVSSSLPD. N1516 carries an N-linked (GlcNAc...) asparagine glycan. Composition is skewed to low complexity over residues 1528-1540 and 1597-1608; these read STAW…AASA and TQTPQTPQTPHT. The segment covering 1684 to 1693 has biased composition (polar residues); it reads LSATPSTRLQ. Helical transmembrane passes span 1859–1879, 1956–1976, 1989–2009, 2017–2037, and 2040–2060; these read VAWL…LLRL, MLAL…WHLI, IIPA…ILAV, IFLL…PPGV, and VQLF…GQLF. The tract at residues 2102 to 2122 is disordered; the sequence is DEGSEDEVSMGSGHLVGDRSA.

As to quaternary structure, interacts with guanylate cyclase GC; the interaction regulates guanylate cyclase GC trafficking and catalytic activity.

The protein resides in the cell membrane. In terms of biological role, in tachyzoites, required for the cellular trafficking of guanylate cyclase GC to the cell membrane and for GC guanylate cyclase activity. This chain is Unique GC organizer UGO, found in Toxoplasma gondii (strain ATCC 50853 / GT1).